An 874-amino-acid chain; its full sequence is Probable inorganic carbon transporter subunit DabA (874 aa).

Residues Cys-398, Asp-400, His-580, and Cys-595 each coordinate Zn(2+).

The protein belongs to the inorganic carbon transporter (TC 9.A.2) DabA family. In terms of assembly, forms a complex with DabB. Zn(2+) serves as cofactor.

The protein resides in the cell membrane. Functionally, part of an energy-coupled inorganic carbon pump. The sequence is that of Probable inorganic carbon transporter subunit DabA from Bacillus cereus (strain ZK / E33L).